Consider the following 238-residue polypeptide: Sugar fermentation stimulation protein homolog (238 aa).

It belongs to the SfsA family.

The protein is Sugar fermentation stimulation protein homolog of Vibrio vulnificus (strain YJ016).